We begin with the raw amino-acid sequence, 245 residues long: MANEANPCPCDIGHRLDYGGMGQEVQVEHIKAYVTRSPVDAGKAVIVVQDIFGWQLSNTRYMADMIAGNGYTTIVPDFFVGQEPWDPAGDWSTFPEWLKSRNARKINREVDAVLRYLKQQCHAQKIGIVGFCWGGIVVHHVMTTYPEVRAGVSVYGIIRDSEDVYNLKNPTLFIFAENDAVIPLEQVSILIQKLKEHCIVNYQVKTFSGQTHGFVHRKREDCSPADKPYIEEARRNLIEWLNKYI.

Ala2 carries the N-acetylalanine modification. Active-site residues include Cys132, Asp179, and His212. Ser223 is modified (phosphoserine).

Belongs to the dienelactone hydrolase family.

It localises to the cytoplasm. The protein localises to the cytosol. Cysteine hydrolase. In Rattus norvegicus (Rat), this protein is Carboxymethylenebutenolidase homolog (Cmbl).